Consider the following 436-residue polypeptide: 3-ketoacyl-CoA thiolase (436 aa).

Residue C99 is the Acyl-thioester intermediate of the active site. Residues H392 and C422 each act as proton acceptor in the active site.

This sequence belongs to the thiolase-like superfamily. Thiolase family. Heterotetramer of two alpha chains (FadJ) and two beta chains (FadI).

The protein localises to the cytoplasm. It catalyses the reaction an acyl-CoA + acetyl-CoA = a 3-oxoacyl-CoA + CoA. Its pathway is lipid metabolism; fatty acid beta-oxidation. Functionally, catalyzes the final step of fatty acid oxidation in which acetyl-CoA is released and the CoA ester of a fatty acid two carbons shorter is formed. The chain is 3-ketoacyl-CoA thiolase from Shewanella sp. (strain W3-18-1).